The primary structure comprises 418 residues: MMNRASLCRIAVLLCILHLSHLIDSTYAQSYLTEKDFLAPLYDDDAITLSDDDFDNARKLSTEMVNSQKKRRVLSHQKYYRGDIRGRAAWTSKLKSGVRRNGVTSVIKRWPNGRIPYVISSQYNERERAVLARAFQEYHSRTCIRFVPRTSFDQDYLYIGKIDGCYSDVGRAGGRQELSLDDGCLQYNTAIHELMHSVGFYHEHERWDRDQYITILWNNIDKDAYDQFGRVDLTESSYYGQAYDYYSVMHYDSLAFSKNGFETLVAKRPEMTAVIGSAIDFSPIDLLKINKLYNCPAPNTIDISQISGNGWQGGGMGPRAPLPQVNLPLPPPPPLPTNPAIAIVGECSDRTNLCWRWLDRCRSYFFEKIMKEFCALSCGYCVPTNAVSKAAPAIPLQPTLSIAEGPEGPMPPLYQRFG.

Positions 1 to 28 are cleaved as a signal peptide; that stretch reads MMNRASLCRIAVLLCILHLSHLIDSTYA. A propeptide spanning residues 29–100 is cleaved from the precursor; the sequence is QSYLTEKDFL…TSKLKSGVRR (72 aa). Residues 101–296 form the Peptidase M12A domain; that stretch reads NGVTSVIKRW…LKINKLYNCP (196 aa). Cystine bridges form between cysteine 143-cysteine 295, cysteine 165-cysteine 184, cysteine 347-cysteine 381, cysteine 354-cysteine 374, and cysteine 361-cysteine 378. Position 192 (histidine 192) interacts with Zn(2+). Residue glutamate 193 is part of the active site. Histidine 196 and histidine 202 together coordinate Zn(2+). Residues 347–381 form the ShKT domain; the sequence is CSDRTNLCWRWLDRCRSYFFEKIMKEFCALSCGYC.

Zn(2+) serves as cofactor.

It is found in the secreted. The catalysed reaction is Hydrolysis of peptide bonds in substrates containing five or more amino acids, preferentially with Ala in P1', and Pro in P2'.. Its activity is regulated as follows. Inhibited by ethylene glycol-bis(2-aminoethylether)-N,N,N,N-tetraacetic acid (EGTA), ethylenediaminetetraacetic acid (EDTA) and o-phenanthroline. Its function is as follows. Metalloprotease. This chain is Zinc metalloproteinase nas-8, found in Steinernema carpocapsae (Entomopathogenic nematode).